Consider the following 617-residue polypeptide: LEAF RUST 10 DISEASE-RESISTANCE LOCUS RECEPTOR-LIKE PROTEIN KINASE-like 2.4 (617 aa).

The signal sequence occupies residues 1 to 26 (MYYLPSSCLVLFLFFSLFYHLPCASS). Residues 27-243 (KQTLGWCESQ…LPTRLSSEAK (217 aa)) lie on the Extracellular side of the membrane. Residues asparagine 41, asparagine 69, asparagine 86, asparagine 112, and asparagine 184 are each glycosylated (N-linked (GlcNAc...) asparagine). The chain crosses the membrane as a helical span at residues 244–264 (IATIAGVSLLPFLVLTLVVHI). At 265–617 (IRKQKTSNDK…SEENSISSEI (353 aa)) the chain is on the cytoplasmic side. The Protein kinase domain maps to 307–594 (NSFAEVVGRG…ALEVPPRPVL (288 aa)). ATP contacts are provided by residues 313–321 (VGRGGFGIV) and lysine 335. Position 380 is a phosphotyrosine (tyrosine 380). Residue aspartate 431 is the Proton acceptor of the active site. A phosphothreonine mark is found at threonine 468 and threonine 471.

It belongs to the protein kinase superfamily. Ser/Thr protein kinase family.

It localises to the membrane. It catalyses the reaction L-seryl-[protein] + ATP = O-phospho-L-seryl-[protein] + ADP + H(+). It carries out the reaction L-threonyl-[protein] + ATP = O-phospho-L-threonyl-[protein] + ADP + H(+). This chain is LEAF RUST 10 DISEASE-RESISTANCE LOCUS RECEPTOR-LIKE PROTEIN KINASE-like 2.4, found in Arabidopsis thaliana (Mouse-ear cress).